Reading from the N-terminus, the 32-residue chain is Cytochrome b6-f complex subunit 6 (32 aa).

Residues valine 6–isoleucine 26 form a helical membrane-spanning segment.

The protein belongs to the PetL family. As to quaternary structure, the 4 large subunits of the cytochrome b6-f complex are cytochrome b6, subunit IV (17 kDa polypeptide, PetD), cytochrome f and the Rieske protein, while the 4 small subunits are PetG, PetL, PetM and PetN. The complex functions as a dimer.

It is found in the cellular thylakoid membrane. In terms of biological role, component of the cytochrome b6-f complex, which mediates electron transfer between photosystem II (PSII) and photosystem I (PSI), cyclic electron flow around PSI, and state transitions. PetL is important for photoautotrophic growth as well as for electron transfer efficiency and stability of the cytochrome b6-f complex. The sequence is that of Cytochrome b6-f complex subunit 6 from Mastigocladus laminosus (Fischerella sp.).